We begin with the raw amino-acid sequence, 505 residues long: Glutamate--tRNA ligase (505 aa).

Residues 12-22 carry the 'HIGH' region motif; it reads PSPTGPLHIGG. A 'KMSKS' region motif is present at residues 260-264; that stretch reads KLSKR. Lys263 provides a ligand contact to ATP.

Belongs to the class-I aminoacyl-tRNA synthetase family. Glutamate--tRNA ligase type 1 subfamily. In terms of assembly, monomer.

Its subcellular location is the cytoplasm. The enzyme catalyses tRNA(Glu) + L-glutamate + ATP = L-glutamyl-tRNA(Glu) + AMP + diphosphate. In terms of biological role, catalyzes the attachment of glutamate to tRNA(Glu) in a two-step reaction: glutamate is first activated by ATP to form Glu-AMP and then transferred to the acceptor end of tRNA(Glu). The sequence is that of Glutamate--tRNA ligase from Porphyromonas gingivalis (strain ATCC BAA-308 / W83).